We begin with the raw amino-acid sequence, 1425 residues long: Nephrocystin-4 (1425 aa).

Residue Ser145 is modified to Phosphoserine. The disordered stretch occupies residues 448-554 (FSLSSDGPTE…VSHLEADLSQ (107 aa)). Composition is skewed to low complexity over residues 473-484 (PASPSGTPAPAA) and 507-530 (SPLS…SQSP). Residues 822-1425 (LTLANVGHAC…ETFCVKVLYQ (604 aa)) form a sufficient for basal bodies localization region.

It belongs to the NPHP4 family. Interacts with NPHP1 and RPGRIP1L/NPHP8; NPHP1, NPHP4 and RPGRIP1L are proposed to form a functional NPHP1-4-8 module localized to cell-cell contacts and the ciliary transition zone; NPHP4 mediates the interaction between NPHP1 and RPGRIP1L. Interacts with IQCB1/NPHP5; the interaction likely requires additional interactors. Interacts with RPGRIP1, CEP164, JADE1, PALS1, INADL, PARD6A, INVS, DVL2. Interacts with INTU; INTU mediates the interaction between NPHP4 and DAAM1. Interacts with JADE1. Interacts with SPATA7. In terms of tissue distribution, expressed in the retina (at protein level).

It is found in the cytoplasm. The protein localises to the cytoskeleton. It localises to the cilium basal body. Its subcellular location is the microtubule organizing center. The protein resides in the centrosome. It is found in the cell junction. The protein localises to the tight junction. In terms of biological role, involved in the organization of apical junctions; the function is proposed to implicate a NPHP1-4-8 module. Does not seem to be strictly required for ciliogenesis. Required for building functional cilia. Involved in the organization of the subapical actin network in multiciliated epithelial cells. Seems to recruit INT to basal bodies of motile cilia which subsequently interacts with actin-modifying proteins such as DAAM1. In cooperation with INVS may down-regulate the canonical Wnt pathway and promote the Wnt-PCP pathway by regulating expression and subcellular location of disheveled proteins. Stabilizes protein levels of JADE1 and promotes its translocation to the nucleus leading to cooperative inhibition of canonical Wnt signaling. Acts as negative regulator of the hippo pathway by association with LATS1 and modifying LATS1-dependent phosphorylation and localization of WWTR1/TAZ. The protein is Nephrocystin-4 (Nphp4) of Mus musculus (Mouse).